Here is a 409-residue protein sequence, read N- to C-terminus: Broad specificity amino-acid racemase (409 aa).

Residues 1 to 24 form the signal peptide; that stretch reads MPFRRTLLAASLVLLITGQAPLYA. Cysteines 71 and 97 form a disulfide. Lysine 75 functions as the Proton acceptor in the catalytic mechanism. Lysine 75 carries the post-translational modification N6-(pyridoxal phosphate)lysine. Arginine 174 contributes to the substrate binding site. Tyrosine 301 functions as the Proton acceptor in the catalytic mechanism. Methionine 349 contacts substrate.

The protein belongs to the alanine racemase family. Bsr subfamily. As to quaternary structure, monomer. Forms a head-to-tail homodimer in the structure. The cofactor is pyridoxal 5'-phosphate.

The protein resides in the periplasm. The enzyme catalyses an L-alpha-amino acid = a D-alpha-amino acid. It catalyses the reaction L-lysine = D-lysine. The catalysed reaction is L-arginine = D-arginine. It carries out the reaction L-alanine = D-alanine. Its activity is regulated as follows. Activity is enhanced by Co(2+), Mn(2+) and Sr(2+), and decreased by Cu(2+). Functionally, amino-acid racemase that catalyzes the interconversion of L-lysine and D-lysine, and L-arginine and D-arginine. To a lesser extent, is also able to interconvert alanine and isoleucine enantiomers. This chain is Broad specificity amino-acid racemase, found in Pseudomonas putida (Arthrobacter siderocapsulatus).